The following is a 291-amino-acid chain: Undecaprenyl-diphosphatase (291 aa).

8 consecutive transmembrane segments (helical) span residues 1–21 (MFII…LTEF), 48–68 (SAFT…AWVF), 102–122 (LHVL…DDFI), 126–146 (LFSV…MIIA), 162–182 (ISYF…WPGF), 203–223 (SDFT…LSLL), 231–251 (IADI…GLIA), and 267–287 (FAIY…GFGI).

The protein belongs to the UppP family.

Its subcellular location is the cell membrane. It carries out the reaction di-trans,octa-cis-undecaprenyl diphosphate + H2O = di-trans,octa-cis-undecaprenyl phosphate + phosphate + H(+). Its function is as follows. Catalyzes the dephosphorylation of undecaprenyl diphosphate (UPP). Confers resistance to bacitracin. The chain is Undecaprenyl-diphosphatase from Staphylococcus aureus (strain MRSA252).